Consider the following 552-residue polypeptide: Hydroxylamine reductase (552 aa).

[2Fe-2S] cluster contacts are provided by C5, C8, C20, and C27. H251, E275, C319, C407, C435, C460, E494, and K496 together coordinate hybrid [4Fe-2O-2S] cluster. Cysteine persulfide is present on C407.

It belongs to the HCP family. The cofactor is [2Fe-2S] cluster. Hybrid [4Fe-2O-2S] cluster serves as cofactor.

The protein localises to the cytoplasm. The catalysed reaction is A + NH4(+) + H2O = hydroxylamine + AH2 + H(+). Its function is as follows. Catalyzes the reduction of hydroxylamine to form NH(3) and H(2)O. This is Hydroxylamine reductase from Escherichia coli (strain UTI89 / UPEC).